Reading from the N-terminus, the 895-residue chain is Protein translocase subunit SecA (895 aa).

ATP is bound by residues Gln-86, 104-108 (GEGKT), and Asp-494. Low complexity-rich tracts occupy residues 838-849 (AAATPPGFGAPP) and 870-882 (GDAAATDADTGNR). Residues 838-895 (AAATPPGFGAPPVRQQLQYSAPTAEGDVEVHAGDAAATDADTGNRAQRRANQRQQREV) are disordered.

It belongs to the SecA family. In terms of assembly, monomer and homodimer. Part of the essential Sec protein translocation apparatus which comprises SecA, SecYEG and auxiliary proteins SecDF. Other proteins may also be involved.

The protein resides in the cell membrane. It localises to the cytoplasm. It catalyses the reaction ATP + H2O + cellular proteinSide 1 = ADP + phosphate + cellular proteinSide 2.. Part of the Sec protein translocase complex. Interacts with the SecYEG preprotein conducting channel. Has a central role in coupling the hydrolysis of ATP to the transfer of proteins into and across the cell membrane, serving as an ATP-driven molecular motor driving the stepwise translocation of polypeptide chains across the membrane. The sequence is that of Protein translocase subunit SecA from Kineococcus radiotolerans (strain ATCC BAA-149 / DSM 14245 / SRS30216).